The sequence spans 117 residues: Basic phospholipase A2 pseudexin B chain (117 aa).

7 disulfide bridges follow: C11/C71, C27/C117, C29/C45, C44/C98, C51/C91, C60/C84, and C78/C89. Ca(2+) is bound by residues Y28, G30, and G32. The active site involves H48. D49 is a Ca(2+) binding site. D92 is a catalytic residue.

Belongs to the phospholipase A2 family. Group I subfamily. D49 sub-subfamily. Requires Ca(2+) as cofactor. As to expression, expressed by the venom gland.

It is found in the secreted. The catalysed reaction is a 1,2-diacyl-sn-glycero-3-phosphocholine + H2O = a 1-acyl-sn-glycero-3-phosphocholine + a fatty acid + H(+). Functionally, PLA2 catalyzes the calcium-dependent hydrolysis of the 2-acyl groups in 3-sn-phosphoglycerides. The protein is Basic phospholipase A2 pseudexin B chain of Pseudechis porphyriacus (Red-bellied black snake).